The chain runs to 428 residues: Dihydroorotase (428 aa).

Positions 61 and 63 each coordinate Zn(2+). Substrate is bound by residues 63–65 and Asn-95; that span reads HLR. Residues Asp-153, His-180, and His-233 each contribute to the Zn(2+) site. Asn-279 serves as a coordination point for substrate. Asp-306 provides a ligand contact to Zn(2+). Asp-306 is an active-site residue. Residues His-310 and 324–325 contribute to the substrate site; that span reads FG.

It belongs to the metallo-dependent hydrolases superfamily. DHOase family. Class I DHOase subfamily. Zn(2+) is required as a cofactor.

The enzyme catalyses (S)-dihydroorotate + H2O = N-carbamoyl-L-aspartate + H(+). It functions in the pathway pyrimidine metabolism; UMP biosynthesis via de novo pathway; (S)-dihydroorotate from bicarbonate: step 3/3. In terms of biological role, catalyzes the reversible cyclization of carbamoyl aspartate to dihydroorotate. This is Dihydroorotase from Geobacillus kaustophilus (strain HTA426).